The primary structure comprises 319 residues: MRVLLIAGGVSPEHEVSLLSAEGVLRHIPFPTDLAVIAQDGRWLLGEKALTALEAKAAPEGEHPFPPPLSWERYDVVFPLLHGRFGEDGTVQGFLELLGKPYVGAGVAASALCMDKDLSKRVLAQAGVPVVPWVAVRKGEPPVVPFDPPFFVKPANTGSSVGISRVERFQDLEAALALAFRYDEKAVVEKALSPVRELEVGVLGNVFGEASPVGEVRYEAPFYDYETKYTPGRAELLIPAPLDPGTQETVQELALKAYKVLGVRGMARVDFFLAEGELYLNELNTIPGFTPTSMYPRLFEAGGVAYPELLRRLVELALT.

Residues 120 to 315 (KRVLAQAGVP…YPELLRRLVE (196 aa)) enclose the ATP-grasp domain. 147-198 (DPPFFVKPANTGSSVGISRVERFQDLEAALALAFRYDEKAVVEKALSPVREL) contributes to the ATP binding site. Residues Asp-270, Glu-282, and Asn-284 each coordinate Mg(2+).

It belongs to the D-alanine--D-alanine ligase family. Mg(2+) is required as a cofactor. Requires Mn(2+) as cofactor.

Its subcellular location is the cytoplasm. It carries out the reaction 2 D-alanine + ATP = D-alanyl-D-alanine + ADP + phosphate + H(+). The protein operates within cell wall biogenesis; peptidoglycan biosynthesis. Cell wall formation. The polypeptide is D-alanine--D-alanine ligase (Thermus thermophilus (strain ATCC 27634 / DSM 579 / HB8)).